Consider the following 568-residue polypeptide: 2-succinyl-5-enolpyruvyl-6-hydroxy-3-cyclohexene-1-carboxylate synthase (568 aa).

Belongs to the TPP enzyme family. MenD subfamily. Homodimer. Mg(2+) is required as a cofactor. Mn(2+) serves as cofactor. It depends on thiamine diphosphate as a cofactor.

The enzyme catalyses isochorismate + 2-oxoglutarate + H(+) = 5-enolpyruvoyl-6-hydroxy-2-succinyl-cyclohex-3-ene-1-carboxylate + CO2. It participates in quinol/quinone metabolism; 1,4-dihydroxy-2-naphthoate biosynthesis; 1,4-dihydroxy-2-naphthoate from chorismate: step 2/7. The protein operates within quinol/quinone metabolism; menaquinone biosynthesis. Its function is as follows. Catalyzes the thiamine diphosphate-dependent decarboxylation of 2-oxoglutarate and the subsequent addition of the resulting succinic semialdehyde-thiamine pyrophosphate anion to isochorismate to yield 2-succinyl-5-enolpyruvyl-6-hydroxy-3-cyclohexene-1-carboxylate (SEPHCHC). The protein is 2-succinyl-5-enolpyruvyl-6-hydroxy-3-cyclohexene-1-carboxylate synthase of Histophilus somni (strain 129Pt) (Haemophilus somnus).